A 364-amino-acid polypeptide reads, in one-letter code: PHD finger protein 6 (364 aa).

Ser-2 carries the N-acetylserine modification. 2 short sequence motifs (nuclear localization signal) span residues 13-16 and 129-133; these read RQRK and RKHKK. The C2HC pre-PHD-type 1 zinc-finger motif lies at 14–52; the sequence is QRKCGFCKSNRDKECGQLLISENQKVAAHHKCMLFSSAL. An extended PHD1 domain (ePHD1) region spans residues 14–132; it reads QRKCGFCKSN…IYMVYCRKHK (119 aa). The PHD-type 1 zinc finger occupies 80–132; that stretch reads LMCSLCHCPGATIGCDVKTCHRTYHYHCALHDKAQIREKPSQGIYMVYCRKHK. Residues Ser-138, Ser-145, and Ser-155 each carry the phosphoserine modification. The segment at 139–211 is disordered; sequence EADLEESFNE…RSSPNDTRPK (73 aa). Positions 157-169 match the Nucleolar localization signal motif; sequence KTKKKSRKGRPRK. Basic residues predominate over residues 157-171; the sequence is KTKKKSRKGRPRKTN. Residue Lys-173 forms a Glycyl lysine isopeptide (Lys-Gly) (interchain with G-Cter in SUMO2) linkage. 2 positions are modified to phosphoserine: Ser-183 and Ser-199. The C2HC pre-PHD-type 2 zinc finger occupies 209–249; sequence RPKCGFCHVGEEENEARGKLHIFNAKKAAAHYKCMLFSSGT. An extended PHD2 domain (ePHD2) region spans residues 209-330; the sequence is RPKCGFCHVG…IYKLYCKNHS (122 aa). Lys-227 is covalently cross-linked (Glycyl lysine isopeptide (Lys-Gly) (interchain with G-Cter in SUMO2)). The segment at 278–330 adopts a PHD-type 2 zinc-finger fold; the sequence is MKCTLCSQPGATIGCEIKACVKTYHYHCGVQDKAKYIENMSRGIYKLYCKNHS. The disordered stretch occupies residues 330-364; that stretch reads SGNDERDEEDEERESKSRGRVAIDQQLTQQQLNGN. The segment covering 354–364 has biased composition (polar residues); the sequence is QQLTQQQLNGN. Thr-357 is modified (phosphothreonine).

As to quaternary structure, interacts with UBTF. Interacts with the NuRD complex component RBBP4 (via the nucleolar localization motif), the interaction mediates transcriptional repression activity. As to expression, at 12.5 dpc it is highly expressed in the embryonic central nervous system and at lower levels in other tissues. Very low levels present throughout the adult brain.

Its subcellular location is the nucleus. The protein localises to the nucleolus. It is found in the chromosome. The protein resides in the centromere. It localises to the kinetochore. Functionally, transcriptional regulator that associates with ribosomal RNA promoters and suppresses ribosomal RNA (rRNA) transcription. The sequence is that of PHD finger protein 6 (Phf6) from Mus musculus (Mouse).